Reading from the N-terminus, the 302-residue chain is Endochitinase 4 (302 aa).

The signal sequence occupies residues 1–18; the sequence is EFTALSLLFSLLLLTASA. The Chitin-binding type-1 domain maps to 19–60; it reads EQCGKQAGGARCAAGLCCSNFGWCGNTNDYCGPGKCQSQCPS. Intrachain disulfides connect Cys-21–Cys-36, Cys-30–Cys-42, Cys-35–Cys-49, and Cys-54–Cys-58. Positions 59-79 are disordered; sequence PSGPSPKPPTPGPGPSGGDIG. Positions 61–72 are enriched in pro residues; it reads GPSPKPPTPGPG. Glu-144 functions as the Proton donor in the catalytic mechanism. Cys-162 and Cys-182 form a disulfide bridge.

This sequence belongs to the glycosyl hydrolase 19 family. Chitinase class I subfamily.

It localises to the vacuole. It carries out the reaction Random endo-hydrolysis of N-acetyl-beta-D-glucosaminide (1-&gt;4)-beta-linkages in chitin and chitodextrins.. Its function is as follows. Defense against chitin-containing fungal pathogens. This chain is Endochitinase 4 (CHTB4), found in Solanum tuberosum (Potato).